We begin with the raw amino-acid sequence, 310 residues long: MSGERAKRFPLALEDLKRAPRKSEGRPGERQTAGAVPKAADKPAAVLKPVAVKPAAVRAPLPGIAAAKPATAPKPTALKPALPKPAAPSIAPAGAFALTSERVRERMVERLRANGVTDARVLDAMAAVPRHLFVDPGLATQAYEDSALPIGHQQTISKPSVVARMIELAMAGRTLERVLEIGTGCGYQAAVLSHVARDVYSIERIKPLYERAKLNLRPLRVPNIRLHYGDGRVGLPSAAPFDAIVIAAAGLDVPQALLEQLAIGGRLVAPVGAQSGQHQVLTLVERVAHAQWRESRLDRVFFVPLKSGVI.

The interval 1–41 (MSGERAKRFPLALEDLKRAPRKSEGRPGERQTAGAVPKAAD) is disordered. The segment covering 14 to 29 (EDLKRAPRKSEGRPGE) has biased composition (basic and acidic residues). Ser-157 is a catalytic residue.

This sequence belongs to the methyltransferase superfamily. L-isoaspartyl/D-aspartyl protein methyltransferase family.

The protein localises to the cytoplasm. The enzyme catalyses [protein]-L-isoaspartate + S-adenosyl-L-methionine = [protein]-L-isoaspartate alpha-methyl ester + S-adenosyl-L-homocysteine. In terms of biological role, catalyzes the methyl esterification of L-isoaspartyl residues in peptides and proteins that result from spontaneous decomposition of normal L-aspartyl and L-asparaginyl residues. It plays a role in the repair and/or degradation of damaged proteins. The sequence is that of Protein-L-isoaspartate O-methyltransferase from Burkholderia cenocepacia (strain HI2424).